We begin with the raw amino-acid sequence, 303 residues long: Mesenteric estrogen-dependent adipogenesis protein (303 aa).

In terms of tissue distribution, highly expressed in the visceral fat depot.

It is found in the cytoplasm. Involved in processes that promote adipocyte differentiation, lipid accumulation, and glucose uptake in mature adipocytes. The sequence is that of Mesenteric estrogen-dependent adipogenesis protein (MEDAG) from Homo sapiens (Human).